Here is a 207-residue protein sequence, read N- to C-terminus: Proteasome subunit beta (207 aa).

Positions 1 to 9 (MSNKNTFEG) are cleaved as a propeptide — removed in mature form; by autocatalysis. The Nucleophile role is filled by Thr-10.

It belongs to the peptidase T1B family. In terms of assembly, the 20S proteasome core is composed of 14 alpha and 14 beta subunits that assemble into four stacked heptameric rings, resulting in a barrel-shaped structure. The two inner rings, each composed of seven catalytic beta subunits, are sandwiched by two outer rings, each composed of seven alpha subunits. The catalytic chamber with the active sites is on the inside of the barrel. Has a gated structure, the ends of the cylinder being occluded by the N-termini of the alpha-subunits. Is capped at one or both ends by the proteasome regulatory ATPase, PAN.

It is found in the cytoplasm. The catalysed reaction is Cleavage of peptide bonds with very broad specificity.. The formation of the proteasomal ATPase PAN-20S proteasome complex, via the docking of the C-termini of PAN into the intersubunit pockets in the alpha-rings, triggers opening of the gate for substrate entry. Interconversion between the open-gate and close-gate conformations leads to a dynamic regulation of the 20S proteasome proteolysis activity. Functionally, component of the proteasome core, a large protease complex with broad specificity involved in protein degradation. The protein is Proteasome subunit beta of Methanobrevibacter ruminantium (strain ATCC 35063 / DSM 1093 / JCM 13430 / OCM 146 / M1) (Methanobacterium ruminantium).